Consider the following 116-residue polypeptide: Large ribosomal subunit protein bL19 (116 aa).

Belongs to the bacterial ribosomal protein bL19 family.

Its function is as follows. This protein is located at the 30S-50S ribosomal subunit interface and may play a role in the structure and function of the aminoacyl-tRNA binding site. In Clostridium novyi (strain NT), this protein is Large ribosomal subunit protein bL19.